Reading from the N-terminus, the 728-residue chain is Catalase-peroxidase 1 (728 aa).

Positions 1–22 (MDKTQSSQGKCPVMHGANSAVA) are cleaved as a signal peptide. The tryptophyl-tyrosyl-methioninium (Trp-Tyr) (with M-251) cross-link spans 97–225 (WHSAGTYRVA…LAAVMMGLIY (129 aa)). Residue histidine 98 is the Proton acceptor of the active site. Residues 225-251 (YVNPEGVDGKPDPLRTAQDVRVTFARM) constitute a cross-link (tryptophyl-tyrosyl-methioninium (Tyr-Met) (with W-97)). Histidine 266 contacts heme b.

The protein belongs to the peroxidase family. Peroxidase/catalase subfamily. Homodimer or homotetramer. Requires heme b as cofactor. Post-translationally, formation of the three residue Trp-Tyr-Met cross-link is important for the catalase, but not the peroxidase activity of the enzyme.

It carries out the reaction H2O2 + AH2 = A + 2 H2O. It catalyses the reaction 2 H2O2 = O2 + 2 H2O. Its function is as follows. Bifunctional enzyme with both catalase and broad-spectrum peroxidase activity. This is Catalase-peroxidase 1 from Shewanella sp. (strain ANA-3).